The chain runs to 375 residues: Chaperone protein DnaJ (375 aa).

In terms of domain architecture, J spans 5–70; sequence DYYEVLGVNR…RKRASYDQFG (66 aa). A CR-type zinc finger spans residues 133–211; sequence GLSRTIKVPT…CHGQGRQQQT (79 aa). Zn(2+)-binding residues include Cys-146, Cys-149, Cys-163, Cys-166, Cys-185, Cys-188, Cys-199, and Cys-202. CXXCXGXG motif repeat units follow at residues 146–153, 163–170, 185–192, and 199–206; these read CKTCNGSG, CPRCNGSG, CSVCRGRG, and CTDCHGQG.

It belongs to the DnaJ family. As to quaternary structure, homodimer. Zn(2+) serves as cofactor.

It is found in the cytoplasm. Participates actively in the response to hyperosmotic and heat shock by preventing the aggregation of stress-denatured proteins and by disaggregating proteins, also in an autonomous, DnaK-independent fashion. Unfolded proteins bind initially to DnaJ; upon interaction with the DnaJ-bound protein, DnaK hydrolyzes its bound ATP, resulting in the formation of a stable complex. GrpE releases ADP from DnaK; ATP binding to DnaK triggers the release of the substrate protein, thus completing the reaction cycle. Several rounds of ATP-dependent interactions between DnaJ, DnaK and GrpE are required for fully efficient folding. Also involved, together with DnaK and GrpE, in the DNA replication of plasmids through activation of initiation proteins. The chain is Chaperone protein DnaJ from Coxiella burnetii (strain CbuK_Q154) (Coxiella burnetii (strain Q154)).